The primary structure comprises 407 residues: Cation efflux system protein CusB (407 aa).

A signal peptide spans 1–28 (MKKIALIIGSMIAGGIISAAGFTWFAKA).

This sequence belongs to the membrane fusion protein (MFP) (TC 8.A.1) family. As to quaternary structure, the cus efflux system is composed of CusA, CusB, CusC and CusF.

Functionally, part of a cation efflux system that mediates resistance to copper and silver. In Escherichia coli O157:H7, this protein is Cation efflux system protein CusB (cusB).